The primary structure comprises 420 residues: UDP-N-acetylglucosamine 1-carboxyvinyltransferase (420 aa).

22–23 contributes to the phosphoenolpyruvate binding site; it reads KN. Residue R94 participates in UDP-N-acetyl-alpha-D-glucosamine binding. C118 acts as the Proton donor in catalysis. Position 118 is a 2-(S-cysteinyl)pyruvic acid O-phosphothioketal (C118). UDP-N-acetyl-alpha-D-glucosamine contacts are provided by D307 and I329.

The protein belongs to the EPSP synthase family. MurA subfamily.

The protein localises to the cytoplasm. The catalysed reaction is phosphoenolpyruvate + UDP-N-acetyl-alpha-D-glucosamine = UDP-N-acetyl-3-O-(1-carboxyvinyl)-alpha-D-glucosamine + phosphate. It participates in cell wall biogenesis; peptidoglycan biosynthesis. Functionally, cell wall formation. Adds enolpyruvyl to UDP-N-acetylglucosamine. This chain is UDP-N-acetylglucosamine 1-carboxyvinyltransferase, found in Gluconacetobacter diazotrophicus (strain ATCC 49037 / DSM 5601 / CCUG 37298 / CIP 103539 / LMG 7603 / PAl5).